We begin with the raw amino-acid sequence, 104 residues long: Ig kappa chain b5 variant C region (104 aa).

The Ig-like domain occupies 5 to 100; the sequence is PTVLIFPPSP…SGSPVVQSFS (96 aa). The cysteines at positions 26 and 85 are disulfide-linked.

This is Ig kappa chain b5 variant C region from Oryctolagus cuniculus (Rabbit).